A 70-amino-acid polypeptide reads, in one-letter code: Probable protein transport protein Sec61 subunit gamma (70 aa).

Residues 1–39 (MADQIQEILDVPREFLKDGIQFIKKCQKPDRREFIKISQ) lie on the Cytoplasmic side of the membrane. Residues 40–58 (AVGTGFLIMGAVGYLVKLI) form a helical membrane-spanning segment. The Extracellular segment spans residues 59–70 (HIPLNQVLVGGA).

The protein belongs to the SecE/SEC61-gamma family. In terms of assembly, heterotrimeric complex composed of SEC61-alpha, SEC61-beta and SEC61-gamma.

It is found in the endoplasmic reticulum membrane. Necessary for protein translocation in the endoplasmic reticulum. This is Probable protein transport protein Sec61 subunit gamma from Neurospora crassa (strain ATCC 24698 / 74-OR23-1A / CBS 708.71 / DSM 1257 / FGSC 987).